Reading from the N-terminus, the 364-residue chain is MVKLFIGNLPREATEQEIRSLFEQYGKVLECDIIKNYGFVHIEDKTAAEDAIRNLHHYKLHGVNINVEASKNKSKTSTKLHVGNISPTCTNKELRAKFEEYGPVIECDIVKDYAFVHMERAEDAVEAIRGLDNTEFQGKRMHVQLSTSRLRTAPGMGDQSGCYRCGKEGHWSKECPIDRSGRVADLTEQYNEQYGAVRTPYTMSYGDSLYYNNAYGALDAYYKRCRAARSYEAVAAAAASVYNYAEQTLSQLPQVQNTAMASHLTSTSLDPYDRHLLPTSGAAATAAAAAAAAAAVTAASTSYYGRDRSPLRRATAPVPTVGEGYGYGHESELSQASAAARNSLYDMARYEREQYADRARYSAF.

RRM domains lie at 2–72 (VKLF…ASKN) and 78–148 (TKLH…LSTS). Lys-79 is covalently cross-linked (Glycyl lysine isopeptide (Lys-Gly) (interchain with G-Cter in SUMO2)). Ser-86 carries the post-translational modification Phosphoserine. Residue Lys-92 forms a Glycyl lysine isopeptide (Lys-Gly) (interchain with G-Cter in SUMO2) linkage. The segment at 160-177 (SGCYRCGKEGHWSKECPI) adopts a CCHC-type zinc-finger fold. The interaction with TNPO3 stretch occupies residues 196 to 364 (AVRTPYTMSY…YADRARYSAF (169 aa)). Residue Ser-309 is modified to Phosphoserine.

Interacts with TNPO3; the interaction mediates nuclear import of the protein and is disrupted by nuclear Ran bound to GTP. Interacts with EIF4G1 and WT1. Interacts with EIF4A1; the interaction is modulated under stress-induced conditions. Interacts with AGO1. Interacts with AGO2; the interaction occurs under both cell proliferation and differentiation conditions and in an RNA- and phosphorylation-independent manner. Interacts with DDX5; the interaction occurs in an RNA-independent manner. Interacts with RBPMS; the interaction allows cooperative assembly of RNA-bound stable cell-specific alternative splicing regulatory complexes. In terms of processing, phosphorylated. Phosphorylated in vitro on Ser-309 by SRPK1. Phosphorylation on Ser-309 is induced upon cell stress signaling, which alters its subcellular localization and may modulate its activity on IRES-mediated mRNA translation. Phosphorylation on Ser-309 is induced upon cell muscle differentiation.

The protein resides in the nucleus. Its subcellular location is the nucleolus. It is found in the nucleus speckle. It localises to the cytoplasm. The protein localises to the cytoplasmic granule. Functionally, RNA-binding factor involved in multiple aspects of cellular processes like alternative splicing of pre-mRNA and translation regulation. Modulates alternative 5'-splice site and exon selection. Acts as a muscle cell differentiation-promoting factor. Activates exon skipping of the PTB pre-mRNA during muscle cell differentiation. Antagonizes the activity of the splicing factor PTBP1 to modulate muscle cell-specific exon selection of alpha tropomyosin. Binds to intronic pyrimidine-rich sequence of the TPM1 and MAPT pre-mRNAs. Required for the translational activation of PER1 mRNA in response to circadian clock. Binds directly to the 3'-UTR of the PER1 mRNA. Exerts a suppressive activity on Cap-dependent translation via binding to CU-rich responsive elements within the 3'UTR of mRNAs, a process increased under stress conditions or during myocytes differentiation. Recruits EIF4A1 to stimulate IRES-dependent translation initiation in respons to cellular stress. Associates to internal ribosome entry segment (IRES) in target mRNA species under stress conditions. Plays a role for miRNA-guided RNA cleavage and translation suppression by promoting association of AGO2-containing miRNPs with their cognate target mRNAs. Associates with miRNAs during muscle cell differentiation. Binds preferentially to 5'-CGCGCG[GCA]-3' motif in vitro. This chain is RNA-binding protein 4 (RBM4), found in Macaca fascicularis (Crab-eating macaque).